Here is a 125-residue protein sequence, read N- to C-terminus: Small ribosomal subunit protein uS13 (125 aa).

The segment at 99 to 125 (RGQRTKTNARTRKGKRKTVANKKMAAK) is disordered.

This sequence belongs to the universal ribosomal protein uS13 family. Part of the 30S ribosomal subunit. Forms a loose heterodimer with protein S19. Forms two bridges to the 50S subunit in the 70S ribosome.

Located at the top of the head of the 30S subunit, it contacts several helices of the 16S rRNA. In the 70S ribosome it contacts the 23S rRNA (bridge B1a) and protein L5 of the 50S subunit (bridge B1b), connecting the 2 subunits; these bridges are implicated in subunit movement. Contacts the tRNAs in the A and P-sites. The chain is Small ribosomal subunit protein uS13 from Borrelia turicatae (strain 91E135).